We begin with the raw amino-acid sequence, 522 residues long: Cytochrome P450 monooxygenase FGSG_08207 (522 aa).

A helical membrane pass occupies residues 10–30; that stretch reads LLLSKPVVLGLAACALLFLIG. 2 N-linked (GlcNAc...) asparagine glycosylation sites follow: asparagine 104 and asparagine 155. Heme is bound at residue cysteine 441.

The protein belongs to the cytochrome P450 family. Heme is required as a cofactor.

It localises to the membrane. The protein operates within secondary metabolite biosynthesis. Functionally, cytochrome P450 monooxygenase; part of the gene cluster that mediates the biosynthesis of the lipopeptide fusaristatin A. Fusaristatin A consists of a polyketide chain linked to three amino acid residues glutamine (Gln), dehydroalanine (dehydro-Ala), and beta-aminoisobutyric acid. The biosynthesis starts with formation of a linear polyketide chain by the highly reducing polyketide synthase PKS6. The gene cluster does not contain an acyl-CoA ligase or an acyl-transferase, and it is therefore predicted that the polyketide is transferred directly to the nonribosomal peptide synthetase NRPS7. Modules 1-3 from NRPS7 incorporate dehydro-Ala, Gln, and beta-aminoisobutyric acid in the compound, which is released by cyclization. The beta-aminoisobutyric acid units are most likely not freely available to the NRPS, but can be synthesized from thymine, which requires a dehydrogenase, a monooxygenase, and an aminotransferase. The fusaristatin A cluster contains a cytochrome P450 monooxygenase (FGSG_08207) and an aminotransferase (FGSG_17085), which theoretically can perform two of the enzymatic steps. The enzymes may however also be involved in biosynthesis of dehydroalanine or modification of the polyketide. The dehydro-Ala residue can be a result of cyclization, where serine is dehydrated. The last gene of the cluster encodes a protein with an A/B barrel domain found in variable enzymes, which hampers functional prediction. This chain is Cytochrome P450 monooxygenase FGSG_08207, found in Gibberella zeae (strain ATCC MYA-4620 / CBS 123657 / FGSC 9075 / NRRL 31084 / PH-1) (Wheat head blight fungus).